Consider the following 135-residue polypeptide: Large ribosomal subunit protein mL41 (135 aa).

The transit peptide at 1 to 13 (MGFLTAVTQGLVR) directs the protein to the mitochondrion.

It belongs to the mitochondrion-specific ribosomal protein mL41 family. Component of the mitochondrial ribosome large subunit (39S) which comprises a 16S rRNA and about 50 distinct proteins. Interacts with BCL2.

Its subcellular location is the mitochondrion. Component of the mitochondrial ribosome large subunit. Also involved in apoptosis and cell cycle. Enhances p53/TP53 stability, thereby contributing to p53/TP53-induced apoptosis in response to growth-inhibitory condition. Enhances p53/TP53 translocation to the mitochondria. Has the ability to arrest the cell cycle at the G1 phase, possibly by stabilizing the CDKN1A and CDKN1B (p27Kip1) proteins. In Mus musculus (Mouse), this protein is Large ribosomal subunit protein mL41 (Mrpl41).